Consider the following 914-residue polypeptide: Beta-mannosidase A (914 aa).

The signal sequence occupies residues 1-20 (MRFTATAAALVASSIPATLG). N-linked (GlcNAc...) asparagine glycosylation is found at N39, N79, N230, N265, N299, N309, and N330. E462 serves as the catalytic Proton donor. N-linked (GlcNAc...) asparagine glycosylation is found at N591, N614, N641, N721, N744, N773, N784, and N909.

Belongs to the glycosyl hydrolase 2 family. Beta-mannosidase A subfamily. As to quaternary structure, homodimer.

The protein resides in the secreted. The enzyme catalyses Hydrolysis of terminal, non-reducing beta-D-mannose residues in beta-D-mannosides.. Its pathway is glycan metabolism; N-glycan degradation. Exoglycosidase that cleaves the single beta-linked mannose residue from the non-reducing end of beta-mannosidic oligosaccharides of various complexity and length. Involved in the degradation of polymeric mannan and galactomannan. The sequence is that of Beta-mannosidase A (mndA) from Aspergillus oryzae (strain ATCC 42149 / RIB 40) (Yellow koji mold).